Here is a 96-residue protein sequence, read N- to C-terminus: Muconolactone Delta-isomerase 2 (96 aa).

This sequence belongs to the muconolactone Delta-isomerase family. In terms of assembly, homodecamer.

It carries out the reaction (S)-muconolactone = (4,5-dihydro-5-oxofuran-2-yl)-acetate. The protein operates within aromatic compound metabolism; beta-ketoadipate pathway; 5-oxo-4,5-dihydro-2-furylacetate from catechol: step 3/3. The protein is Muconolactone Delta-isomerase 2 (catC2) of Acinetobacter lwoffii.